The sequence spans 480 residues: Protein U54 (480 aa).

This chain is Protein U54, found in Elephas maximus (Indian elephant).